Consider the following 265-residue polypeptide: Mlc titration factor A (265 aa).

4 residues coordinate Zn(2+): His-111, His-148, His-152, and Glu-211.

It belongs to the MtfA family. As to quaternary structure, interacts with Mlc. Zn(2+) is required as a cofactor.

Its subcellular location is the cytoplasm. Involved in the modulation of the activity of the glucose-phosphotransferase system (glucose-PTS). Interacts with the transcriptional repressor Mlc, preventing its interaction with DNA and leading to the modulation of expression of genes regulated by Mlc, including ptsG, which encodes the PTS system glucose-specific EIICB component. Functionally, shows zinc-dependent metallopeptidase activity. The sequence is that of Mlc titration factor A from Shigella dysenteriae serotype 1 (strain Sd197).